A 217-amino-acid polypeptide reads, in one-letter code: Adenylate kinase (217 aa).

Position 10–15 (10–15 (GAGKGT)) interacts with ATP. The interval 30 to 59 (STGDMFRAAMKEGTPLGLQAKQYMDRGDLV) is NMP. Residues Thr-31, Arg-36, 57–59 (DLV), 85–88 (GFPR), and Gln-92 contribute to the AMP site. The tract at residues 126–163 (GRRICRNCGATYHLIFHPPAKPGVCDKCGGELYQRADD) is LID. Residue Arg-127 participates in ATP binding. 2 residues coordinate Zn(2+): Cys-130 and Cys-133. Position 136–137 (136–137 (TY)) interacts with ATP. Residues Cys-150 and Cys-153 each coordinate Zn(2+). AMP-binding residues include Arg-160 and Arg-171. Gln-199 provides a ligand contact to ATP.

The protein belongs to the adenylate kinase family. In terms of assembly, monomer.

The protein localises to the cytoplasm. The catalysed reaction is AMP + ATP = 2 ADP. The protein operates within purine metabolism; AMP biosynthesis via salvage pathway; AMP from ADP: step 1/1. Its function is as follows. Catalyzes the reversible transfer of the terminal phosphate group between ATP and AMP. Plays an important role in cellular energy homeostasis and in adenine nucleotide metabolism. This is Adenylate kinase from Geobacillus stearothermophilus (Bacillus stearothermophilus).